Here is a 261-residue protein sequence, read N- to C-terminus: Probable 6-phosphogluconolactonase 4 (261 aa).

It belongs to the glucosamine/galactosamine-6-phosphate isomerase family. 6-phosphogluconolactonase subfamily.

It localises to the cytoplasm. The protein resides in the cytosol. It carries out the reaction 6-phospho-D-glucono-1,5-lactone + H2O = 6-phospho-D-gluconate + H(+). It functions in the pathway carbohydrate degradation; pentose phosphate pathway; D-ribulose 5-phosphate from D-glucose 6-phosphate (oxidative stage): step 2/3. In terms of biological role, catalyzes the hydrolysis of 6-phosphogluconolactone to 6-phosphogluconate. The polypeptide is Probable 6-phosphogluconolactonase 4 (Arabidopsis thaliana (Mouse-ear cress)).